A 474-amino-acid chain; its full sequence is Glutamate--tRNA ligase (474 aa).

A 'HIGH' region motif is present at residues 9 to 19 (PSPTGYLHVGG). Positions 240 to 244 (KLSKR) match the 'KMSKS' region motif. K243 serves as a coordination point for ATP.

This sequence belongs to the class-I aminoacyl-tRNA synthetase family. Glutamate--tRNA ligase type 1 subfamily. As to quaternary structure, monomer.

It is found in the cytoplasm. It carries out the reaction tRNA(Glu) + L-glutamate + ATP = L-glutamyl-tRNA(Glu) + AMP + diphosphate. Its function is as follows. Catalyzes the attachment of glutamate to tRNA(Glu) in a two-step reaction: glutamate is first activated by ATP to form Glu-AMP and then transferred to the acceptor end of tRNA(Glu). This Aliivibrio salmonicida (strain LFI1238) (Vibrio salmonicida (strain LFI1238)) protein is Glutamate--tRNA ligase.